The primary structure comprises 360 residues: MPTILVSALETSSNVHLEELRRNLPKDYRFIGVFEGSGALYSPREFSVMGFRDVIGRLGFLFKVYKEMIQLAKQADMVLLMDSSSFNIPLAKKIKKQDSHKKIMYYILPQVWAWKKWRAKTLEKYCDFLGAILPFEVSYYQKKAQYVGHPLLDEIKYYKKDIKGETLVFMPGSRKSEIAKIFPLFVEVARILEQNEGFKRRVLVVPSFFKGLDLKALYGEGIEWFEISYDAHKSLFEAEFAFICSGTATLEAALIGTPFVLAYRAKTMDFLIARMFVNLHYIGLANIFYNALNDETPGLGESQLHPELIQHFLSVESLIRAYKDMDRERYFKESLKLREYLMHGSARKIASEIAFLLNLT.

Belongs to the LpxB family.

It carries out the reaction a lipid X + a UDP-2-N,3-O-bis[(3R)-3-hydroxyacyl]-alpha-D-glucosamine = a lipid A disaccharide + UDP + H(+). The protein operates within bacterial outer membrane biogenesis; LPS lipid A biosynthesis. Its function is as follows. Condensation of UDP-2,3-diacylglucosamine and 2,3-diacylglucosamine-1-phosphate to form lipid A disaccharide, a precursor of lipid A, a phosphorylated glycolipid that anchors the lipopolysaccharide to the outer membrane of the cell. This Helicobacter acinonychis (strain Sheeba) protein is Lipid-A-disaccharide synthase.